Reading from the N-terminus, the 356-residue chain is N-methyltransferase 4 (356 aa).

S-adenosyl-L-methionine is bound by residues 93–94 (QS), 128–136 (ILDIGCGFG), and 155–160 (TNSAEQ).

The protein belongs to the CFA/CMAS family. As to expression, expressed in stems, roots, flower buds and leaves.

Its function is as follows. Probable N-methyltransferase not involved in benzylisoquinoline metabolism. Shows no detectable activity with (s)-coclaurine, (R)- or (S)-reticuline, papaverine or (R,S)-tetrahydropapaverine. The sequence is that of N-methyltransferase 4 (NMT4) from Papaver somniferum (Opium poppy).